The primary structure comprises 202 residues: Prostamide/prostaglandin F synthase (202 aa).

Tyr-108 is modified (phosphotyrosine).

The protein belongs to the peroxiredoxin-like PRXL2 family. Prostamide/prostaglandin F synthase subfamily.

The protein localises to the cytoplasm. Its subcellular location is the cytosol. The catalysed reaction is prostaglandin H2 + [thioredoxin]-dithiol = prostaglandin F2alpha + [thioredoxin]-disulfide. The enzyme catalyses prostamide F2alpha + [thioredoxin]-disulfide = prostamide H2 + [thioredoxin]-dithiol. Catalyzes the reduction of prostaglandin-ethanolamide H(2) (prostamide H(2)) to prostamide F(2alpha) with NADPH as proton donor. Also able to reduce prostaglandin H(2) to prostaglandin F(2alpha). The protein is Prostamide/prostaglandin F synthase (PRXL2B) of Sus scrofa (Pig).